Reading from the N-terminus, the 89-residue chain is Cell division topological specificity factor (89 aa).

It belongs to the MinE family.

Functionally, prevents the cell division inhibition by proteins MinC and MinD at internal division sites while permitting inhibition at polar sites. This ensures cell division at the proper site by restricting the formation of a division septum at the midpoint of the long axis of the cell. The protein is Cell division topological specificity factor of Serratia proteamaculans (strain 568).